We begin with the raw amino-acid sequence, 140 residues long: Nucleoside diphosphate kinase (140 aa).

Residues Lys11, Phe59, Arg87, Thr93, Arg104, and Asn114 each contribute to the ATP site. The active-site Pros-phosphohistidine intermediate is the His117.

This sequence belongs to the NDK family. Homotetramer. The cofactor is Mg(2+).

It localises to the cytoplasm. It carries out the reaction a 2'-deoxyribonucleoside 5'-diphosphate + ATP = a 2'-deoxyribonucleoside 5'-triphosphate + ADP. It catalyses the reaction a ribonucleoside 5'-diphosphate + ATP = a ribonucleoside 5'-triphosphate + ADP. Its function is as follows. Major role in the synthesis of nucleoside triphosphates other than ATP. The ATP gamma phosphate is transferred to the NDP beta phosphate via a ping-pong mechanism, using a phosphorylated active-site intermediate. The polypeptide is Nucleoside diphosphate kinase (Sphingopyxis alaskensis (strain DSM 13593 / LMG 18877 / RB2256) (Sphingomonas alaskensis)).